A 1171-amino-acid chain; its full sequence is Pesticidal crystal protein Cry1Ea (1171 aa).

Positions 1094–1124 (ESNSSVHASVYEEKSYTDRRRENPCESNRGY) are disordered. Positions 1103-1117 (VYEEKSYTDRRRENP) are enriched in basic and acidic residues.

The protein belongs to the delta endotoxin family.

Functionally, promotes colloidosmotic lysis by binding to the midgut epithelial cells of many lepidopteran larvae including Spodoptera species. The protein is Pesticidal crystal protein Cry1Ea (cry1Ea) of Bacillus thuringiensis subsp. kenyae.